We begin with the raw amino-acid sequence, 412 residues long: MANVADTKLYDILGVPPGASENELKKAYRKLAKEYHPDKNPNAGDKFKEISFAYEVLSNPEKRELYDRYGEQGLREGSGGGGGMDDIFSHIFGGGLFSFMGNQSRSRNGRRRGEDMMHPLKVSLEDLYNGKTTKLQLSKNVLCSACSGQGGKSGAVQKCSACRGRGVRIMIRQLAPGMVQQMQSVCSDCNGEGEVINEKDRCKKCEGKKVIKEVKILEVHVDKGMKHGQRITFTGEADQAPGVEPGDIVLLLQEKEHEVFQRDGNDLHMTYKIGLVEALCGFQFTFKHLDGRQIVVKYPPGKVIEPGCVRVVRGEGMPQYRNPFEKGDLYIKFDVQFPENNWINPDKLSELEDLLPSRPEVPNIIGDTEEVELQEFDSTRGSGGGQRREAYNDSSDEESSSHHGPGVQCAHQ.

Residues K8–G70 form the J domain. K39 is modified (N6-acetyllysine). S78 and S123 each carry phosphoserine. A CR-type zinc finger spans residues G130–V214. A Glycyl lysine isopeptide (Lys-Gly) (interchain with G-Cter in SUMO2) cross-link involves residue K134. Positions 143 and 146 each coordinate Zn(2+). The CXXCXGXG motif repeat unit spans residues C143 to G150. At K152 the chain carries N6-acetyllysine. C159, C162, C186, C189, C202, and C205 together coordinate Zn(2+). 3 CXXCXGXG motif repeats span residues C159–G166, C186–G193, and C202–K209. The tract at residues P359–Q412 is disordered. Y391 carries the post-translational modification Phosphotyrosine. 2 positions are modified to phosphoserine: S394 and S395. C409 carries the post-translational modification Cysteine methyl ester. The S-farnesyl cysteine moiety is linked to residue C409. The propeptide at A410 to Q412 is removed in mature form.

The protein resides in the membrane. Co-chaperone of Hsc70. Stimulates ATP hydrolysis and the folding of unfolded proteins mediated by HSPA1A/B (in vitro). The chain is DnaJ homolog subfamily A member 2 (DNAJA2) from Bos taurus (Bovine).